The chain runs to 298 residues: Tritrans,polycis-undecaprenyl-diphosphate synthase (geranylgeranyl-diphosphate specific) (298 aa).

Residue Asp-35 is part of the active site. Asp-35 lines the Mg(2+) pocket. Substrate is bound by residues 36–39 (GNRR), Arg-48, His-52, and 80–82 (STE). Catalysis depends on Asn-83, which acts as the Proton acceptor. Residues Phe-84, Arg-86, Arg-208, and 214–216 (RIS) each bind substrate.

This sequence belongs to the UPP synthase family. As to quaternary structure, homodimer. Mg(2+) is required as a cofactor.

The enzyme catalyses geranylgeranyl diphosphate + 7 isopentenyl diphosphate = tri-trans,hepta-cis-undecaprenyl diphosphate + 7 diphosphate. Functionally, catalyzes the sequential condensation of isopentenyl diphosphate (IPP) with geranylgeranyl diphosphate (GGPP) to yield (2Z,6Z,10Z,14Z,18Z,22Z,26Z,30E,34E,38E)-undecaprenyl diphosphate (tritrans,heptacis-UPP). It is probably the precursor of glycosyl carrier lipids. This chain is Tritrans,polycis-undecaprenyl-diphosphate synthase (geranylgeranyl-diphosphate specific), found in Methanosarcina mazei (strain ATCC BAA-159 / DSM 3647 / Goe1 / Go1 / JCM 11833 / OCM 88) (Methanosarcina frisia).